We begin with the raw amino-acid sequence, 496 residues long: Glutamyl-tRNA(Gln) amidotransferase subunit A (496 aa).

Active-site charge relay system residues include Lys75 and Ser150. The active-site Acyl-ester intermediate is Ser174.

The protein belongs to the amidase family. GatA subfamily. As to quaternary structure, heterotrimer of A, B and C subunits.

It carries out the reaction L-glutamyl-tRNA(Gln) + L-glutamine + ATP + H2O = L-glutaminyl-tRNA(Gln) + L-glutamate + ADP + phosphate + H(+). Its function is as follows. Allows the formation of correctly charged Gln-tRNA(Gln) through the transamidation of misacylated Glu-tRNA(Gln) in organisms which lack glutaminyl-tRNA synthetase. The reaction takes place in the presence of glutamine and ATP through an activated gamma-phospho-Glu-tRNA(Gln). The polypeptide is Glutamyl-tRNA(Gln) amidotransferase subunit A (Burkholderia mallei (strain NCTC 10247)).